Here is a 426-residue protein sequence, read N- to C-terminus: Serine--tRNA ligase (426 aa).

233–235 contacts L-serine; that stretch reads TAE. An ATP-binding site is contributed by 264-266; that stretch reads RSE. E287 is a binding site for L-serine. 351 to 354 contributes to the ATP binding site; it reads EISS. S387 contributes to the L-serine binding site.

The protein belongs to the class-II aminoacyl-tRNA synthetase family. Type-1 seryl-tRNA synthetase subfamily. Homodimer. The tRNA molecule binds across the dimer.

The protein resides in the cytoplasm. The enzyme catalyses tRNA(Ser) + L-serine + ATP = L-seryl-tRNA(Ser) + AMP + diphosphate + H(+). It carries out the reaction tRNA(Sec) + L-serine + ATP = L-seryl-tRNA(Sec) + AMP + diphosphate + H(+). Its pathway is aminoacyl-tRNA biosynthesis; selenocysteinyl-tRNA(Sec) biosynthesis; L-seryl-tRNA(Sec) from L-serine and tRNA(Sec): step 1/1. Its function is as follows. Catalyzes the attachment of serine to tRNA(Ser). Is also able to aminoacylate tRNA(Sec) with serine, to form the misacylated tRNA L-seryl-tRNA(Sec), which will be further converted into selenocysteinyl-tRNA(Sec). This Clostridium botulinum (strain Loch Maree / Type A3) protein is Serine--tRNA ligase.